The following is a 119-amino-acid chain: Protein MGF 110-11L (119 aa).

The N-terminal stretch at 1–17 (MKVLLGLLLGYSVLILA) is a signal peptide.

This sequence belongs to the asfivirus MGF 110 family.

The chain is Protein MGF 110-11L from Ornithodoros (relapsing fever ticks).